A 315-amino-acid polypeptide reads, in one-letter code: Voltage-dependent calcium channel gamma-3 subunit (315 aa).

A run of 4 helical transmembrane segments spans residues I8–V28, S104–A124, I135–V155, and F181–I201. Positions R232 to G253 are disordered. The residue at position 248 (S248) is a Phosphoserine.

This sequence belongs to the PMP-22/EMP/MP20 family. CACNG subfamily. As to quaternary structure, the L-type calcium channel is composed of five subunits: alpha-1, alpha-2/delta, beta and gamma. Acts as an auxiliary subunit for AMPA-selective glutamate receptors (AMPARs). Found in a complex with GRIA1, GRIA2, GRIA3, GRIA4, CNIH2, CNIH3, CACNG2, CACNG4, CACNG5, CACNG7 and CACNG8. Interacts with AP4M1 and GRIA1; associates GRIA1 with the adaptor protein complex 4 (AP-4) to target GRIA1 to the somatodendritic compartment of neurons.

The protein resides in the membrane. Regulates the trafficking to the somatodendritic compartment and gating properties of AMPA-selective glutamate receptors (AMPARs). Promotes their targeting to the cell membrane and synapses and modulates their gating properties by slowing their rates of activation, deactivation and desensitization. Does not show subunit-specific AMPA receptor regulation and regulates all AMPAR subunits. Thought to stabilize the calcium channel in an inactivated (closed) state. This Mus musculus (Mouse) protein is Voltage-dependent calcium channel gamma-3 subunit (Cacng3).